Consider the following 509-residue polypeptide: ATP synthase subunit alpha (509 aa).

169–176 contributes to the ATP binding site; that stretch reads GDRQTGKT.

The protein belongs to the ATPase alpha/beta chains family. F-type ATPases have 2 components, CF(1) - the catalytic core - and CF(0) - the membrane proton channel. CF(1) has five subunits: alpha(3), beta(3), gamma(1), delta(1), epsilon(1). CF(0) has three main subunits: a(1), b(2) and c(9-12). The alpha and beta chains form an alternating ring which encloses part of the gamma chain. CF(1) is attached to CF(0) by a central stalk formed by the gamma and epsilon chains, while a peripheral stalk is formed by the delta and b chains.

It localises to the cell inner membrane. The enzyme catalyses ATP + H2O + 4 H(+)(in) = ADP + phosphate + 5 H(+)(out). Produces ATP from ADP in the presence of a proton gradient across the membrane. The alpha chain is a regulatory subunit. This chain is ATP synthase subunit alpha, found in Rhizobium etli (strain CIAT 652).